The primary structure comprises 293 residues: 4-diphosphocytidyl-2-C-methyl-D-erythritol kinase (293 aa).

Residue Lys16 is part of the active site. 99 to 109 serves as a coordination point for ATP; it reads PMGAGLGGGSS. Residue Asp141 is part of the active site.

Belongs to the GHMP kinase family. IspE subfamily.

The enzyme catalyses 4-CDP-2-C-methyl-D-erythritol + ATP = 4-CDP-2-C-methyl-D-erythritol 2-phosphate + ADP + H(+). It participates in isoprenoid biosynthesis; isopentenyl diphosphate biosynthesis via DXP pathway; isopentenyl diphosphate from 1-deoxy-D-xylulose 5-phosphate: step 3/6. Catalyzes the phosphorylation of the position 2 hydroxy group of 4-diphosphocytidyl-2C-methyl-D-erythritol. The chain is 4-diphosphocytidyl-2-C-methyl-D-erythritol kinase from Burkholderia multivorans (strain ATCC 17616 / 249).